The following is a 259-amino-acid chain: Phosphatidylglycerol--prolipoprotein diacylglyceryl transferase (259 aa).

The next 4 membrane-spanning stretches (helical) occupy residues 10–30 (IGLL…LFAY), 50–70 (IISW…ILFY), 86–106 (WKGG…MYIF), and 112–132 (IKFL…IFLG). Arg133 is an a 1,2-diacyl-sn-glycero-3-phospho-(1'-sn-glycerol) binding site. Transmembrane regions (helical) follow at residues 169–189 (LYEA…LFFF), 197–217 (GMLF…IEFV), and 227–247 (ILFN…ILGI).

The protein belongs to the Lgt family.

The protein resides in the cell inner membrane. It carries out the reaction L-cysteinyl-[prolipoprotein] + a 1,2-diacyl-sn-glycero-3-phospho-(1'-sn-glycerol) = an S-1,2-diacyl-sn-glyceryl-L-cysteinyl-[prolipoprotein] + sn-glycerol 1-phosphate + H(+). The protein operates within protein modification; lipoprotein biosynthesis (diacylglyceryl transfer). Catalyzes the transfer of the diacylglyceryl group from phosphatidylglycerol to the sulfhydryl group of the N-terminal cysteine of a prolipoprotein, the first step in the formation of mature lipoproteins. This Ehrlichia ruminantium (strain Welgevonden) protein is Phosphatidylglycerol--prolipoprotein diacylglyceryl transferase.